The following is a 517-amino-acid chain: MANIDDIEKQIENIKINSDDNKNNVSKNKNILLNGVNLKDHEIKDNVKSVDYNNNNNENDTMNEINKHVKNDEYCNKENSNNNNNNNNNNNNNLDTQINETLNLNEKFEKKNEENLCSGCKKVLIKKLSCPICLKNKIFSYFCNQECFKGSWKEHQKIHENMNKENNEKEDHLKTIVKKHLSPENFDPTNRKYWVYDDHLKNFVNFKFTGDVRPWPLSKINHVPSHIERPDYAISSIPESELIYKRKSDIYVNNEEEIQRIREACILGRKTLDYAHTLVSPGVTTDEIDRKVHEFIIKNNAYPSTLNYYKFPKSCCTSVNEIVCHGIPDYRPLKSGDIINIDISVFYKGVHSDLNETYFVGDINDVPKEGKELVETCYFSLMEAIKKCKPGMFYKNIGTLIDAYVSKKNFSVVRSYSGHGVGKLFHSNPTVPHFKKNKAVGIMKPGHVFTIEPMINQGHYSDVLWPDQWTSATSDGKLSAQFEHTLLITNNGVEILTKRTQDSPPLGFDTKDELYYN.

A disordered region spans residues 74-94 (YCNKENSNNNNNNNNNNNNNL). Over residues 79 to 94 (NSNNNNNNNNNNNNNL) the composition is skewed to low complexity. The C6H2-type zinc finger occupies 114–166 (ENLCSGCKKVLIKKLSCPICLKNKIFSYFCNQECFKGSWKEHQKIHENMNKEN). Cys117, Cys120, Cys130, Cys133, Cys143, Cys147, His155, and His159 together coordinate Zn(2+). His325 is a binding site for a protein. Zn(2+)-binding residues include Asp342, Asp353, and His419. His426 lines the a protein pocket. 2 residues coordinate Zn(2+): Glu452 and Glu483.

This sequence belongs to the peptidase M24A family. Methionine aminopeptidase type 1 subfamily. As to quaternary structure, associates with the 60S ribosomal subunit of the 80S translational complex. The cofactor is Zn(2+). Requires Co(2+) as cofactor. Mn(2+) serves as cofactor. It depends on Fe(2+) as a cofactor.

The protein localises to the cytoplasm. The enzyme catalyses Release of N-terminal amino acids, preferentially methionine, from peptides and arylamides.. Inhibited by pyrimidine derivative XC11. Functionally, cotranslationally removes the N-terminal methionine from nascent proteins. The N-terminal methionine is often cleaved when the second residue in the primary sequence is small and uncharged (Met-Ala-, Cys, Gly, Pro, Ser, Thr, or Val). May play an important role in parasite growth during the blood asexual stage. The polypeptide is Methionine aminopeptidase 1b (Plasmodium falciparum (isolate 3D7)).